Reading from the N-terminus, the 473-residue chain is Cysteine--tRNA ligase (473 aa).

Cys-28 serves as a coordination point for Zn(2+). Residues 30 to 40 (PTVYNYIHIGN) carry the 'HIGH' region motif. 3 residues coordinate Zn(2+): Cys-210, His-235, and Glu-239. A 'KMSKS' region motif is present at residues 267-271 (KMSKS). Lys-270 serves as a coordination point for ATP.

It belongs to the class-I aminoacyl-tRNA synthetase family. In terms of assembly, monomer. Zn(2+) serves as cofactor.

It is found in the cytoplasm. It carries out the reaction tRNA(Cys) + L-cysteine + ATP = L-cysteinyl-tRNA(Cys) + AMP + diphosphate. The sequence is that of Cysteine--tRNA ligase from Fusobacterium nucleatum subsp. nucleatum (strain ATCC 25586 / DSM 15643 / BCRC 10681 / CIP 101130 / JCM 8532 / KCTC 2640 / LMG 13131 / VPI 4355).